Here is a 233-residue protein sequence, read N- to C-terminus: Glycerol-3-phosphate acyltransferase (233 aa).

The next 5 membrane-spanning stretches (helical) occupy residues 7–27 (WIII…GYII), 94–114 (ISIV…YIGF), 127–147 (VIAI…IVAF), 153–173 (SIGS…GVLI), and 185–205 (ISYE…LLII).

The protein belongs to the PlsY family. As to quaternary structure, probably interacts with PlsX.

It is found in the cell membrane. The enzyme catalyses an acyl phosphate + sn-glycerol 3-phosphate = a 1-acyl-sn-glycero-3-phosphate + phosphate. Its pathway is lipid metabolism; phospholipid metabolism. In terms of biological role, catalyzes the transfer of an acyl group from acyl-phosphate (acyl-PO(4)) to glycerol-3-phosphate (G3P) to form lysophosphatidic acid (LPA). This enzyme utilizes acyl-phosphate as fatty acyl donor, but not acyl-CoA or acyl-ACP. In Acholeplasma laidlawii, this protein is Glycerol-3-phosphate acyltransferase.